We begin with the raw amino-acid sequence, 427 residues long: 3-isopropylmalate dehydratase large subunit (427 aa).

The [4Fe-4S] cluster site is built by Cys-308, Cys-368, and Cys-371.

The protein belongs to the aconitase/IPM isomerase family. LeuC type 2 subfamily. Heterodimer of LeuC and LeuD. Requires [4Fe-4S] cluster as cofactor.

The enzyme catalyses (2R,3S)-3-isopropylmalate = (2S)-2-isopropylmalate. It functions in the pathway amino-acid biosynthesis; L-leucine biosynthesis; L-leucine from 3-methyl-2-oxobutanoate: step 2/4. In terms of biological role, catalyzes the isomerization between 2-isopropylmalate and 3-isopropylmalate, via the formation of 2-isopropylmaleate. This Geobacter metallireducens (strain ATCC 53774 / DSM 7210 / GS-15) protein is 3-isopropylmalate dehydratase large subunit.